Here is a 551-residue protein sequence, read N- to C-terminus: Endolytic murein transglycosylase (551 aa).

The Cytoplasmic segment spans residues 1 to 187 (MSEKSREEEK…PKKEKKSHVK (187 aa)). The tract at residues 38–180 (VRTPANEPSA…EGAKPAKPKK (143 aa)) is disordered. Low complexity-rich tracts occupy residues 100-110 (PSSPAEESGSR) and 145-157 (QAGP…ATET). Residues 159 to 174 (DIIRDTSRRSRREGAK) are compositionally biased toward basic and acidic residues. The helical transmembrane segment at 188-208 (AFVISFLVFLALLSAGGYFGY) threads the bilayer. The Extracellular segment spans residues 209-551 (QYVLDSLLPI…VAEHVNSKLN (343 aa)).

The protein belongs to the transglycosylase MltG family.

It localises to the cell membrane. The enzyme catalyses a peptidoglycan chain = a peptidoglycan chain with N-acetyl-1,6-anhydromuramyl-[peptide] at the reducing end + a peptidoglycan chain with N-acetylglucosamine at the non-reducing end.. In terms of biological role, functions as a peptidoglycan terminase that cleaves nascent peptidoglycan strands endolytically to terminate their elongation. Involved in peripheral peptidoglycan (PG) synthesis. The protein is Endolytic murein transglycosylase of Streptococcus pneumoniae serotype 2 (strain D39 / NCTC 7466).